The primary structure comprises 249 residues: MNAPGGRRKEGRRTHRPREQDRNVQLSKALSYALRHGALKLGLPMRADGFVPLQALLQLPQFHSFSIEDVQLVVNTNEKQRFTLQPGEPSTGLLIRANQGHSLQVPELELTPLETPQALPLTLVHGTFWKHWPSILLKGLSRQGRTHIHLASGLPGDPGVISGIRPNCEVAVFIDGPLALTDGIPFFCSANGVILTPGNAEGFLLPKYFKEALQLRPTRKPLSLAGDKETETQSGPKLSSRGGRRKIQQ.

Residue methionine 1 is modified to N-acetylmethionine. Disordered regions lie at residues 1–25 and 220–249; these read MNAPGGRRKEGRRTHRPREQDRNVQ and KPLSLAGDKETETQSGPKLSSRGGRRKIQQ.

It belongs to the KptA/TPT1 family.

It carries out the reaction 2'-phospho-[ligated tRNA] + NAD(+) = mature tRNA + ADP-alpha-D-ribose 1'',2''-cyclic phosphate + nicotinamide. Functionally, catalyzes the last step of tRNA splicing, the transfer of the splice junction 2'-phosphate from ligated tRNA to NAD to produce ADP-ribose 1''-2'' cyclic phosphate. This chain is tRNA 2'-phosphotransferase 1 (Trpt1), found in Mus musculus (Mouse).